A 332-amino-acid polypeptide reads, in one-letter code: MPIRVGVIGAGVMGADHIRNLSTTIGGAKVTFVADLDAGRAAAAAPPSARITTDPTELINSSDVDAVVVASHDSTHAGLVLECFEAMTPVLCEKPLAPTLLESLEVVAADADIVAATGASLLSLGFMRRFDPGYVALRQAVQGRVQGEPLMVHCVSRNAAAGPGTTSELAITNSAIHELDIIPWLLGSPVTEVSWQAGKQTSRAEPGLQDPSFMTLRTADGTLTTLELYLNAQYGYTTRCEVVSEQGTTSLQESSLLGIEQDGTRQAVIPADWRPRFADAYRLQLQAWISALAGGEAPSLAGAQDGLNASLVAQAMIQSLHSDGTTTKVSYS.

It belongs to the Gfo/Idh/MocA family. Homotetramer.

The catalysed reaction is myo-inositol + NAD(+) = scyllo-inosose + NADH + H(+). Involved in the oxidation of myo-inositol (MI) to 2-keto-myo-inositol (2KMI or 2-inosose). This Paenarthrobacter aurescens (strain TC1) protein is Inositol 2-dehydrogenase 2.